The following is a 302-amino-acid chain: 33 kDa chaperonin (302 aa).

Cystine bridges form between C240–C242 and C273–C276.

This sequence belongs to the HSP33 family. Under oxidizing conditions two disulfide bonds are formed involving the reactive cysteines. Under reducing conditions zinc is bound to the reactive cysteines and the protein is inactive.

It is found in the cytoplasm. Redox regulated molecular chaperone. Protects both thermally unfolding and oxidatively damaged proteins from irreversible aggregation. Plays an important role in the bacterial defense system toward oxidative stress. This Synechocystis sp. (strain ATCC 27184 / PCC 6803 / Kazusa) protein is 33 kDa chaperonin.